A 351-amino-acid chain; its full sequence is Probable cell division control protein 7 homolog 1 (351 aa).

In terms of domain architecture, Protein kinase spans 21 to 341; that stretch reads YTPIEKIGEG…ASDALSHPFF (321 aa). ATP is bound by residues 27 to 35 and lysine 50; that span reads IGEGSFSVV. The active-site Proton acceptor is the aspartate 137.

This sequence belongs to the protein kinase superfamily. Ser/Thr protein kinase family. CDC7 subfamily. The cofactor is Mg(2+).

It carries out the reaction L-seryl-[protein] + ATP = O-phospho-L-seryl-[protein] + ADP + H(+). It catalyses the reaction L-threonyl-[protein] + ATP = O-phospho-L-threonyl-[protein] + ADP + H(+). Serine/threonine-protein kinase. Needed for the initiation of DNA synthesis during mitosis as well as for synaptonemal complex formation and commitment to recombination during meiosis. This is Probable cell division control protein 7 homolog 1 (CDC7-1) from Encephalitozoon cuniculi (strain GB-M1) (Microsporidian parasite).